Reading from the N-terminus, the 479-residue chain is MTVTTSSPTTAEGRTPGIGRVARVIGPVVDVEFAPDELPEIYTALHVDRTIDGETAVLTLEVAQHIGDNTIRAISMQQTDGLVRGAPVRDTGAPISVPVGNATKGHVFNVLGNPLDVDKVDAETYWPIHRSAPAFDQLESKTEMFTTGIKVIDLLAPYVRGGKIGLMGGAGVGKTVIIQEMIRRVAKEFGGVSVFAGVGERTREGNDLFLEMTEAGVIEDTALVFGQMDEPPGTRLRVALGALTMAEYFRDVQKQDVLLFIDNIFRFTQAGSEVSTLLGRMPSAVGYQPTLADEMGALQERITSTRGHSITSLQAIYVPADDLTDPAPATTFTHLDANTVLDRAISDLGIYPAVSPLDSNSRILDARYIGQEHYDTAREVQRILQRYKDLQDIIAILGIDELSEEDKILVNRARRIQRFLSQPFFVAEQFTGIPGKFVPLDETIDSFRRLTQGDYDHLPEQAFFMCGGIEDAEKNAENL.

168–175 (GGAGVGKT) contacts ATP.

The protein belongs to the ATPase alpha/beta chains family. F-type ATPases have 2 components, CF(1) - the catalytic core - and CF(0) - the membrane proton channel. CF(1) has five subunits: alpha(3), beta(3), gamma(1), delta(1), epsilon(1). CF(0) has three main subunits: a(1), b(2) and c(9-12). The alpha and beta chains form an alternating ring which encloses part of the gamma chain. CF(1) is attached to CF(0) by a central stalk formed by the gamma and epsilon chains, while a peripheral stalk is formed by the delta and b chains.

The protein localises to the cell membrane. The catalysed reaction is ATP + H2O + 4 H(+)(in) = ADP + phosphate + 5 H(+)(out). Produces ATP from ADP in the presence of a proton gradient across the membrane. The catalytic sites are hosted primarily by the beta subunits. This chain is ATP synthase subunit beta, found in Parafrankia sp. (strain EAN1pec).